The following is a 257-amino-acid chain: Dihydroorotate dehydrogenase B (NAD(+)), electron transfer subunit (257 aa).

Residues 2–100 enclose the FAD-binding FR-type domain; it reads ILIEDLTVVS…MGPQGNGFDI (99 aa). Residues 51–54, 68–70, and 75–76 contribute to the FAD site; these read RPIS, VYR, and GT. [2Fe-2S] cluster is bound by residues Cys220, Cys225, Cys228, and Cys244.

Belongs to the PyrK family. Heterotetramer of 2 PyrK and 2 PyrD type B subunits. It depends on [2Fe-2S] cluster as a cofactor. FAD serves as cofactor.

The protein operates within pyrimidine metabolism; UMP biosynthesis via de novo pathway; orotate from (S)-dihydroorotate (NAD(+) route): step 1/1. Responsible for channeling the electrons from the oxidation of dihydroorotate from the FMN redox center in the PyrD type B subunit to the ultimate electron acceptor NAD(+). In Streptococcus thermophilus (strain ATCC BAA-491 / LMD-9), this protein is Dihydroorotate dehydrogenase B (NAD(+)), electron transfer subunit.